The sequence spans 585 residues: Testis-specific serine kinase substrate (585 aa).

The span at 91–108 (EPDSSGTDSTTEDSGPLA) shows a compositional bias: low complexity. The segment at 91–126 (EPDSSGTDSTTEDSGPLALPGPPASPTTPWAPEDPD) is disordered. Ser224, Ser281, and Ser309 each carry phosphoserine. Disordered regions lie at residues 262 to 309 (SRHG…PSLS) and 559 to 585 (LEGS…GSEQ).

Post-translationally, phosphorylated on serine residue(s) by STK22A/TSSK1 and STK22B/TSSK2.

It is found in the cytoplasm. Its subcellular location is the cytoskeleton. The protein resides in the microtubule organizing center. The protein localises to the centrosome. It localises to the centriole. May play a role in testicular physiology, most probably in the process of spermatogenesis or spermatid development. In Rattus norvegicus (Rat), this protein is Testis-specific serine kinase substrate (Tsks).